We begin with the raw amino-acid sequence, 70 residues long: UPF0270 protein VS_2853 (70 aa).

The protein belongs to the UPF0270 family.

The chain is UPF0270 protein VS_2853 from Vibrio atlanticus (strain LGP32) (Vibrio splendidus (strain Mel32)).